The following is a 601-amino-acid chain: Potassium channel KAT2 (601 aa).

Residues Met-1–Glu-42 are Cytoplasmic-facing. A helical membrane pass occupies residues Thr-43 to Leu-63. Topologically, residues Arg-64 to Ser-71 are extracellular. The chain crosses the membrane as a helical span at residues Leu-72–Ala-92. Residues Tyr-93 to Tyr-112 lie on the Cytoplasmic side of the membrane. Residues Phe-113 to Ile-133 form a helical membrane-spanning segment. Topologically, residues Phe-134–Arg-144 are extracellular. The chain crosses the membrane as a helical; Voltage-sensor span at residues Leu-145–Glu-165. Residues Lys-166–Lys-179 are Cytoplasmic-facing. Residues Leu-180–Asp-200 form a helical membrane-spanning segment. Over Arg-201–Val-227 the chain is Extracellular. The segment at residues Thr-228–Ala-247 is an intramembrane region (pore-forming). Topologically, residues Glu-248–Arg-251 are extracellular. Residues Glu-252 to Gly-272 form a helical membrane-spanning segment. The Cytoplasmic segment spans residues Asn-273 to Ile-601. Residue Leu-356–Lys-475 coordinates a nucleoside 3',5'-cyclic phosphate. In terms of domain architecture, KHA spans Arg-530–Ile-601.

It belongs to the potassium channel family. Plant (TC 1.A.1.4) subfamily.

It localises to the membrane. In terms of biological role, probable inward-rectifying potassium channel. Assuming opened or closed conformations in response to the voltage difference across the membrane, the channel is activated by hyperpolarization. This chain is Potassium channel KAT2, found in Oryza sativa subsp. japonica (Rice).